We begin with the raw amino-acid sequence, 405 residues long: MPGIAIVGAQWGDEGKGKITDFLAPEAEFVVRYQGGANAGHTVTAKGQTFKLNLLPSGVLHEGTVSVLGDGMVIDADKFMEERRNLIAGGLNPELRISDRAHLVLPHHKYVDGRKDFVGTTGRGIGPAYADRARRVGVRFGDLSDDTVLRERLERLLEAKPNSTRDAGWTSVDVAMESLAPIREALLPFVQDTGSQLRAAITEGRNVLFEGAQATLLDLNYGTYPFVTSSHPTVGGILVGAGVNHKAIHKVYGVAKAFNTRVGHGPFVTEVLGDAEILRLRGDGSKPWDEFGTTTGRARRVGWLDLHLLKYAVEVNGLDGLVINKMDILSGMDSIPVCVSYDAAGEPVYKHMKGWATTDGADSRASLPREAQAYLDLIEETVGCPVVIFSAGPAREQTYGSVSWT.

GTP is bound by residues 12-18 and 40-42; these read GDEGKGK and GHT. The Proton acceptor role is filled by D13. The Mg(2+) site is built by D13 and G40. IMP contacts are provided by residues 13 to 16, 38 to 41, T121, R135, Q213, T228, and R297; these read DEGK and NAGH. The Proton donor role is filled by H41. Residue 293 to 299 coordinates substrate; sequence TTTGRAR. GTP contacts are provided by residues R299, 325–327, and 390–392; these read KMD and SAG.

The protein belongs to the adenylosuccinate synthetase family. Homodimer. Mg(2+) is required as a cofactor.

The protein resides in the cytoplasm. The catalysed reaction is IMP + L-aspartate + GTP = N(6)-(1,2-dicarboxyethyl)-AMP + GDP + phosphate + 2 H(+). The protein operates within purine metabolism; AMP biosynthesis via de novo pathway; AMP from IMP: step 1/2. In terms of biological role, plays an important role in the de novo pathway of purine nucleotide biosynthesis. Catalyzes the first committed step in the biosynthesis of AMP from IMP. This Deinococcus deserti (strain DSM 17065 / CIP 109153 / LMG 22923 / VCD115) protein is Adenylosuccinate synthetase.